A 166-amino-acid polypeptide reads, in one-letter code: Phospholipase A2 inhibitor (166 aa).

The signal sequence occupies residues M1 to G19. A C-type lectin domain is found at L46–E161. N-linked (GlcNAc...) asparagine glycosylation is found at N61 and N122. 2 disulfide bridges follow: C83-C160 and C138-C152.

Belongs to the alpha-type phospholipase A2 inhibitor family. As to quaternary structure, homotrimer; non-covalently linked. Expressed by the liver.

The protein resides in the secreted. Functionally, this phospholipase A2 inhibitor binds directly phospholipase A2 in the presence or absence of calcium. The polypeptide is Phospholipase A2 inhibitor (Bothrops alternatus (Urutu)).